Here is a 572-residue protein sequence, read N- to C-terminus: Formate--tetrahydrofolate ligase (572 aa).

Position 65–72 (65–72 (TPLGEGKT)) interacts with ATP.

Belongs to the formate--tetrahydrofolate ligase family.

It carries out the reaction (6S)-5,6,7,8-tetrahydrofolate + formate + ATP = (6R)-10-formyltetrahydrofolate + ADP + phosphate. It participates in one-carbon metabolism; tetrahydrofolate interconversion. This chain is Formate--tetrahydrofolate ligase, found in Chloroflexus aurantiacus (strain ATCC 29366 / DSM 635 / J-10-fl).